We begin with the raw amino-acid sequence, 545 residues long: Purple acid phosphatase 13 (545 aa).

Positions Met-1–Gly-25 are cleaved as a signal peptide. 2 N-linked (GlcNAc...) asparagine glycosylation sites follow: Asn-125 and Asn-145. Asp-203 serves as a coordination point for Fe cation. Residue Asn-209 is glycosylated (N-linked (GlcNAc...) asparagine). Tyr-233 contacts Fe cation. Asn-240, Asn-254, Asn-306, Asn-321, Asn-351, and Asn-367 each carry an N-linked (GlcNAc...) asparagine glycan. The active-site Proton donor is the His-389. Residue His-416 coordinates Zn(2+). His-416–Asp-418 is a binding site for substrate. Asn-428, Asn-466, Asn-475, and Asn-510 each carry an N-linked (GlcNAc...) asparagine glycan.

This sequence belongs to the metallophosphoesterase superfamily. Purple acid phosphatase family. As to quaternary structure, homodimer. Fe cation is required as a cofactor. Requires Zn(2+) as cofactor. In terms of tissue distribution, expressed in stems, leaves, flowers and siliques.

The protein localises to the secreted. It catalyses the reaction a phosphate monoester + H2O = an alcohol + phosphate. The polypeptide is Purple acid phosphatase 13 (PAP13) (Arabidopsis thaliana (Mouse-ear cress)).